Here is a 435-residue protein sequence, read N- to C-terminus: Casein kinase I homolog 2 (435 aa).

Residues 12–282 (YRVGRKIGEG…FLQELFDDVL (271 aa)) form the Protein kinase domain. ATP-binding positions include 18–26 (IGEGSFGVI) and K41. The Proton acceptor role is filled by D131. Phosphoserine is present on S361.

This sequence belongs to the protein kinase superfamily. CK1 Ser/Thr protein kinase family. Casein kinase I subfamily.

It is found in the cytoplasm. It catalyses the reaction L-seryl-[protein] + ATP = O-phospho-L-seryl-[protein] + ADP + H(+). The catalysed reaction is L-threonyl-[protein] + ATP = O-phospho-L-threonyl-[protein] + ADP + H(+). In terms of biological role, casein kinases are operationally defined by their preferential utilization of acidic proteins such as caseins as substrates. May contribute to the regulation of morphology. In Schizosaccharomyces pombe (strain 972 / ATCC 24843) (Fission yeast), this protein is Casein kinase I homolog 2 (cki2).